The chain runs to 224 residues: DNA repair and recombination protein RadB (224 aa).

The protein belongs to the eukaryotic RecA-like protein family. RadB subfamily.

Involved in DNA repair and in homologous recombination. May regulate the cleavage reactions of the branch-structured DNA. Has a very weak ATPase activity that is not stimulated by DNA. Binds DNA but does not promote DNA strands exchange. This chain is DNA repair and recombination protein RadB, found in Thermococcus onnurineus (strain NA1).